Consider the following 454-residue polypeptide: Tubulin beta-2 chain (454 aa).

Residues glutamine 11, glutamate 69, serine 138, glycine 142, threonine 143, glycine 144, asparagine 204, and asparagine 226 each coordinate GTP. Glutamate 69 contacts Mg(2+). Positions 426 to 454 are disordered; it reads QEASVDDEAMEDDAEAEGGAGQNEAVEEF. Acidic residues predominate over residues 429–441; sequence SVDDEAMEDDAEA.

The protein belongs to the tubulin family. As to quaternary structure, dimer of alpha and beta chains. A typical microtubule is a hollow water-filled tube with an outer diameter of 25 nm and an inner diameter of 15 nM. Alpha-beta heterodimers associate head-to-tail to form protofilaments running lengthwise along the microtubule wall with the beta-tubulin subunit facing the microtubule plus end conferring a structural polarity. Microtubules usually have 13 protofilaments but different protofilament numbers can be found in some organisms and specialized cells. The cofactor is Mg(2+).

Its subcellular location is the cytoplasm. The protein localises to the cytoskeleton. It is found in the spindle. It localises to the nucleus. Functionally, tubulin is the major constituent of microtubules, a cylinder consisting of laterally associated linear protofilaments composed of alpha- and beta-tubulin heterodimers. Microtubules grow by the addition of GTP-tubulin dimers to the microtubule end, where a stabilizing cap forms. Below the cap, tubulin dimers are in GDP-bound state, owing to GTPase activity of alpha-tubulin. This is the major beta tubulin of mitotic spindle. This chain is Tubulin beta-2 chain (BETC), found in Physarum polycephalum (Slime mold).